Here is a 348-residue protein sequence, read N- to C-terminus: Glucokinase (348 aa).

Residue 14–19 (GDVGGS) participates in ATP binding. The segment at 327 to 348 (SDPAPVAAPTHPRGGTAGDMHA) is disordered.

This sequence belongs to the bacterial glucokinase family.

It is found in the cytoplasm. It catalyses the reaction D-glucose + ATP = D-glucose 6-phosphate + ADP + H(+). The polypeptide is Glucokinase (Chromobacterium violaceum (strain ATCC 12472 / DSM 30191 / JCM 1249 / CCUG 213 / NBRC 12614 / NCIMB 9131 / NCTC 9757 / MK)).